A 219-amino-acid polypeptide reads, in one-letter code: ATP-dependent Clp protease proteolytic subunit 1 (219 aa).

Ser113 acts as the Nucleophile in catalysis. His138 is an active-site residue.

The protein belongs to the peptidase S14 family. Fourteen ClpP subunits assemble into 2 heptameric rings which stack back to back to give a disk-like structure with a central cavity, resembling the structure of eukaryotic proteasomes.

It is found in the cytoplasm. It carries out the reaction Hydrolysis of proteins to small peptides in the presence of ATP and magnesium. alpha-casein is the usual test substrate. In the absence of ATP, only oligopeptides shorter than five residues are hydrolyzed (such as succinyl-Leu-Tyr-|-NHMec, and Leu-Tyr-Leu-|-Tyr-Trp, in which cleavage of the -Tyr-|-Leu- and -Tyr-|-Trp bonds also occurs).. In terms of biological role, cleaves peptides in various proteins in a process that requires ATP hydrolysis. Has a chymotrypsin-like activity. Plays a major role in the degradation of misfolded proteins. Probably partially responsible for degradation of ECF sigma factor SigR prime. This chain is ATP-dependent Clp protease proteolytic subunit 1, found in Streptomyces coelicolor (strain ATCC BAA-471 / A3(2) / M145).